The sequence spans 263 residues: Small ribosomal subunit protein uS2 (263 aa).

Belongs to the universal ribosomal protein uS2 family.

This chain is Small ribosomal subunit protein uS2, found in Hyphomonas neptunium (strain ATCC 15444).